A 79-amino-acid chain; its full sequence is Sulfur carrier protein TusA (79 aa).

Residue C15 is the Cysteine persulfide intermediate of the active site.

This sequence belongs to the sulfur carrier protein TusA family. As to quaternary structure, interacts with IscS.

It localises to the cytoplasm. It participates in tRNA modification. In terms of biological role, sulfur carrier protein involved in sulfur trafficking in the cell. Part of a sulfur-relay system required for 2-thiolation during synthesis of 2-thiouridine of the modified wobble base 5-methylaminomethyl-2-thiouridine (mnm(5)s(2)U) in tRNA. Interacts with IscS and stimulates its cysteine desulfurase activity. Accepts an activated sulfur from IscS, which is then transferred to TusD, and thus determines the direction of sulfur flow from IscS to 2-thiouridine formation. Also appears to be involved in sulfur transfer for the biosynthesis of molybdopterin. In Buchnera aphidicola subsp. Baizongia pistaciae (strain Bp), this protein is Sulfur carrier protein TusA.